The following is a 190-amino-acid chain: Myosin, light chain 1, alkali; skeletal, fast (190 aa).

Basic and acidic residues predominate over residues methionine 1–glutamate 17. Residues methionine 1–alanine 33 form a disordered region. Positions alanine 19 to proline 28 are enriched in pro residues. EF-hand domains follow at residues aspartate 46 to asparagine 81 and alanine 123 to lysine 158.

In terms of assembly, myosin is a hexamer of 2 heavy chains and 4 light chains. Does not bind calcium. In terms of tissue distribution, expressed in fast muscle fibers during skeletal muscle differentiation.

Non-regulatory myosin light chain required for proper formation and/or maintenance of myofibers, and thus appropriate muscle function. The polypeptide is Myosin, light chain 1, alkali; skeletal, fast (Danio rerio (Zebrafish)).